A 475-amino-acid chain; its full sequence is Exodeoxyribonuclease 7 large subunit (475 aa).

The disordered stretch occupies residues 452-475 (DHGLNRSSKSKRIKSKQDDQGTLF). The span at 466-475 (SKQDDQGTLF) shows a compositional bias: basic and acidic residues.

The protein belongs to the XseA family. In terms of assembly, heterooligomer composed of large and small subunits.

Its subcellular location is the cytoplasm. It carries out the reaction Exonucleolytic cleavage in either 5'- to 3'- or 3'- to 5'-direction to yield nucleoside 5'-phosphates.. In terms of biological role, bidirectionally degrades single-stranded DNA into large acid-insoluble oligonucleotides, which are then degraded further into small acid-soluble oligonucleotides. The chain is Exodeoxyribonuclease 7 large subunit from Bartonella quintana (strain Toulouse) (Rochalimaea quintana).